The primary structure comprises 124 residues: Small ribosomal subunit protein uS12 (124 aa).

3-methylthioaspartic acid is present on Asp90.

This sequence belongs to the universal ribosomal protein uS12 family. Part of the 30S ribosomal subunit. Contacts proteins S8 and S17. May interact with IF1 in the 30S initiation complex.

With S4 and S5 plays an important role in translational accuracy. Functionally, interacts with and stabilizes bases of the 16S rRNA that are involved in tRNA selection in the A site and with the mRNA backbone. Located at the interface of the 30S and 50S subunits, it traverses the body of the 30S subunit contacting proteins on the other side and probably holding the rRNA structure together. The combined cluster of proteins S8, S12 and S17 appears to hold together the shoulder and platform of the 30S subunit. In Wolbachia pipientis subsp. Culex pipiens (strain wPip), this protein is Small ribosomal subunit protein uS12.